A 307-amino-acid polypeptide reads, in one-letter code: UDP-3-O-acyl-N-acetylglucosamine deacetylase (307 aa).

H78, H241, and D245 together coordinate Zn(2+). H268 acts as the Proton donor in catalysis.

It belongs to the LpxC family. Requires Zn(2+) as cofactor.

It carries out the reaction a UDP-3-O-[(3R)-3-hydroxyacyl]-N-acetyl-alpha-D-glucosamine + H2O = a UDP-3-O-[(3R)-3-hydroxyacyl]-alpha-D-glucosamine + acetate. It functions in the pathway glycolipid biosynthesis; lipid IV(A) biosynthesis; lipid IV(A) from (3R)-3-hydroxytetradecanoyl-[acyl-carrier-protein] and UDP-N-acetyl-alpha-D-glucosamine: step 2/6. Functionally, catalyzes the hydrolysis of UDP-3-O-myristoyl-N-acetylglucosamine to form UDP-3-O-myristoylglucosamine and acetate, the committed step in lipid A biosynthesis. The polypeptide is UDP-3-O-acyl-N-acetylglucosamine deacetylase (Variovorax paradoxus (strain S110)).